Reading from the N-terminus, the 97-residue chain is UPF0250 protein RSc0326 (97 aa).

The protein belongs to the UPF0250 family.

This chain is UPF0250 protein RSc0326, found in Ralstonia nicotianae (strain ATCC BAA-1114 / GMI1000) (Ralstonia solanacearum).